The sequence spans 457 residues: L-asparaginase-like protein GL17509 (457 aa).

Residues 1–20 (MRYLCRAQLLSLLLLPLLKA) form the signal peptide. 3 disulfides stabilise this stretch: Cys72-Cys78, Cys172-Cys188, and Cys327-Cys354.

Belongs to the Ntn-hydrolase family.

This is L-asparaginase-like protein GL17509 from Drosophila persimilis (Fruit fly).